Consider the following 291-residue polypeptide: Tyrosine recombinase XerA (291 aa).

Positions 9 to 102 (PESGDLYNAF…AVRRFLKWIN (94 aa)) constitute a Core-binding (CB) domain. Positions 115 to 279 (KEVKALDEIQ…VLDDLRNEYL (165 aa)) constitute a Tyr recombinase domain. Residues Arg-150, Lys-175, His-231, Arg-234, and His-257 contribute to the active site. Tyr-266 functions as the O-(3'-phospho-DNA)-tyrosine intermediate in the catalytic mechanism.

It belongs to the 'phage' integrase family. XerA subfamily.

It localises to the cytoplasm. Site-specific tyrosine recombinase, which acts by catalyzing the cutting and rejoining of the recombining DNA molecules. Probably involved in the resolution of chromosome dimers. Binds to the dif site. The polypeptide is Tyrosine recombinase XerA (Saccharolobus solfataricus (strain ATCC 35092 / DSM 1617 / JCM 11322 / P2) (Sulfolobus solfataricus)).